The sequence spans 378 residues: Erythronate-4-phosphate dehydrogenase (378 aa).

Substrate is bound by residues serine 45 and threonine 66. Residues aspartate 146 and threonine 175 each contribute to the NAD(+) site. Arginine 208 is an active-site residue. Residue aspartate 232 coordinates NAD(+). Glutamate 237 is an active-site residue. The active-site Proton donor is histidine 254. Glycine 257 lines the NAD(+) pocket. Residue tyrosine 258 coordinates substrate.

It belongs to the D-isomer specific 2-hydroxyacid dehydrogenase family. PdxB subfamily. In terms of assembly, homodimer.

The protein localises to the cytoplasm. It catalyses the reaction 4-phospho-D-erythronate + NAD(+) = (R)-3-hydroxy-2-oxo-4-phosphooxybutanoate + NADH + H(+). It functions in the pathway cofactor biosynthesis; pyridoxine 5'-phosphate biosynthesis; pyridoxine 5'-phosphate from D-erythrose 4-phosphate: step 2/5. Catalyzes the oxidation of erythronate-4-phosphate to 3-hydroxy-2-oxo-4-phosphonooxybutanoate. The sequence is that of Erythronate-4-phosphate dehydrogenase from Escherichia coli O45:K1 (strain S88 / ExPEC).